A 299-amino-acid polypeptide reads, in one-letter code: Ribosomal protein L11 methyltransferase (299 aa).

Positions 150, 171, 193, and 234 each coordinate S-adenosyl-L-methionine.

This sequence belongs to the methyltransferase superfamily. PrmA family.

It localises to the cytoplasm. The catalysed reaction is L-lysyl-[protein] + 3 S-adenosyl-L-methionine = N(6),N(6),N(6)-trimethyl-L-lysyl-[protein] + 3 S-adenosyl-L-homocysteine + 3 H(+). Functionally, methylates ribosomal protein L11. In Dictyoglomus turgidum (strain DSM 6724 / Z-1310), this protein is Ribosomal protein L11 methyltransferase.